The primary structure comprises 170 residues: Photosystem II extrinsic protein V (170 aa).

The first 33 residues, methionine 1–alanine 33, serve as a signal peptide directing secretion. The heme c site is built by cysteine 70, cysteine 73, histidine 74, and histidine 125.

It belongs to the cytochrome c family. PsbV subfamily. As to quaternary structure, PSII is composed of 1 copy each of membrane proteins PsbA, PsbB, PsbC, PsbD, PsbE, PsbF, PsbH, PsbI, PsbJ, PsbK, PsbL, PsbM, PsbT, PsbX, PsbY, PsbZ, Psb30/Ycf12, peripheral proteins PsbO, CyanoQ (PsbQ), PsbU, PsbV and a large number of cofactors. It forms dimeric complexes. Heme c is required as a cofactor.

It localises to the cellular thylakoid membrane. Functionally, one of the extrinsic, lumenal subunits of photosystem II (PSII). PSII is a light-driven water plastoquinone oxidoreductase, using light energy to abstract electrons from H(2)O, generating a proton gradient subsequently used for ATP formation. The extrinsic proteins stabilize the structure of photosystem II oxygen-evolving complex (OEC), the ion environment of oxygen evolution and protect the OEC against heat-induced inactivation. Low-potential cytochrome c that plays a role in the OEC of PSII. This chain is Photosystem II extrinsic protein V, found in Synechococcus sp. (strain CC9605).